The primary structure comprises 444 residues: Phosphoglucosamine mutase (444 aa).

Residue Ser102 is the Phosphoserine intermediate of the active site. Positions 102, 241, 243, and 245 each coordinate Mg(2+). Ser102 bears the Phosphoserine mark.

It belongs to the phosphohexose mutase family. It depends on Mg(2+) as a cofactor. Post-translationally, activated by phosphorylation.

The catalysed reaction is alpha-D-glucosamine 1-phosphate = D-glucosamine 6-phosphate. Catalyzes the conversion of glucosamine-6-phosphate to glucosamine-1-phosphate. The chain is Phosphoglucosamine mutase from Histophilus somni (strain 2336) (Haemophilus somnus).